We begin with the raw amino-acid sequence, 349 residues long: tRNA pseudouridine synthase D (349 aa).

Phe26 is a substrate binding site. Catalysis depends on Asp79, which acts as the Nucleophile. Asn128 provides a ligand contact to substrate. Positions 154-302 (GVPNYFGSQR…VEGSRRAVLL (149 aa)) constitute a TRUD domain. Residue Phe328 coordinates substrate.

This sequence belongs to the pseudouridine synthase TruD family.

It catalyses the reaction uridine(13) in tRNA = pseudouridine(13) in tRNA. In terms of biological role, responsible for synthesis of pseudouridine from uracil-13 in transfer RNAs. In Yersinia pseudotuberculosis serotype O:1b (strain IP 31758), this protein is tRNA pseudouridine synthase D.